The sequence spans 89 residues: Small ribosomal subunit protein uS15 (89 aa).

The protein belongs to the universal ribosomal protein uS15 family. In terms of assembly, part of the 30S ribosomal subunit. Forms a bridge to the 50S subunit in the 70S ribosome, contacting the 23S rRNA.

In terms of biological role, one of the primary rRNA binding proteins, it binds directly to 16S rRNA where it helps nucleate assembly of the platform of the 30S subunit by binding and bridging several RNA helices of the 16S rRNA. Functionally, forms an intersubunit bridge (bridge B4) with the 23S rRNA of the 50S subunit in the ribosome. The sequence is that of Small ribosomal subunit protein uS15 from Leuconostoc mesenteroides subsp. mesenteroides (strain ATCC 8293 / DSM 20343 / BCRC 11652 / CCM 1803 / JCM 6124 / NCDO 523 / NBRC 100496 / NCIMB 8023 / NCTC 12954 / NRRL B-1118 / 37Y).